Here is a 222-residue protein sequence, read N- to C-terminus: uncharacterized protein (222 aa).

4 consecutive transmembrane segments (helical) span residues 25–45, 80–100, 111–131, and 160–180; these read LLWL…PATA, LLGA…ALIY, FAIM…FPLL, and LALT…VPFF.

It is found in the cell membrane. This is an uncharacterized protein from Bacillus subtilis (strain 168).